The sequence spans 621 residues: GPI-anchor transamidase component GPAA1 (621 aa).

The Cytoplasmic portion of the chain corresponds to M1–R19. Residues L20–F41 traverse the membrane as a helical segment. Residues P42 to S370 lie on the Lumenal side of the membrane. Residues Y49 and S51 each contribute to the a 2-acyl-6-[6-phosphoethanolamine-alpha-D-mannosyl-(1-&gt;2)-6-phosphoethanolamine-alpha-D-mannosyl-(1-&gt;6)-2-phosphoethanolamine-alpha-D-mannosyl-(1-&gt;4)-alpha-D-glucosaminyl]-1-(1-radyl,2-acyl-sn-glycero-3-phospho)-1D-myo-inositol site. N203 carries an N-linked (GlcNAc...) asparagine glycan. C259 and C266 form a disulfide bridge. Residues H354, Q355, and S356 each contribute to the a 2-acyl-6-[6-phosphoethanolamine-alpha-D-mannosyl-(1-&gt;2)-6-phosphoethanolamine-alpha-D-mannosyl-(1-&gt;6)-2-phosphoethanolamine-alpha-D-mannosyl-(1-&gt;4)-alpha-D-glucosaminyl]-1-(1-radyl,2-acyl-sn-glycero-3-phospho)-1D-myo-inositol site. Q355 is a binding site for Mg(2+). The helical transmembrane segment at I371–W393 threads the bilayer. Topologically, residues M394 to A425 are cytoplasmic. The helical transmembrane segment at S426 to H450 threads the bilayer. Residues L451 to E462 are Lumenal-facing. A helical membrane pass occupies residues A463 to H483. The Cytoplasmic portion of the chain corresponds to R484 to W495. Helical transmembrane passes span M496–S519 and L520–K536. Residues P537–P540 lie on the Cytoplasmic side of the membrane. The helical transmembrane segment at R541 to L563 threads the bilayer. Residues W564–A597 lie on the Lumenal side of the membrane. Residues L598–F619 form a helical membrane-spanning segment. Residues W620 to K621 are Cytoplasmic-facing.

As to quaternary structure, heteropentamer. Part of the GPI-anchor transamidase complex, consisting of PIGK, PIGT, PIGS, PIGU and GAA1. Interacts with PIGK. Ubiquitously expressed in fetal and adult tissues. Expressed at higher levels in fetal tissues than adult tissues. In embryos abundant in the choroid plexus, skeletal muscle,.

The protein resides in the endoplasmic reticulum membrane. It participates in glycolipid biosynthesis; glycosylphosphatidylinositol-anchor biosynthesis. In terms of biological role, component of the glycosylphosphatidylinositol-anchor (GPI-anchor) transamidase (GPI-T) complex that catalyzes the formation of the linkage between a proprotein and a GPI-anchor and participates in GPI anchored protein biosynthesis. Binds GPI-anchor. The polypeptide is GPI-anchor transamidase component GPAA1 (Mus musculus (Mouse)).